Reading from the N-terminus, the 229-residue chain is Large ribosomal subunit protein uL1 (229 aa).

The protein belongs to the universal ribosomal protein uL1 family. Part of the 50S ribosomal subunit.

In terms of biological role, binds directly to 23S rRNA. The L1 stalk is quite mobile in the ribosome, and is involved in E site tRNA release. Protein L1 is also a translational repressor protein, it controls the translation of the L11 operon by binding to its mRNA. This chain is Large ribosomal subunit protein uL1, found in Listeria innocua serovar 6a (strain ATCC BAA-680 / CLIP 11262).